Consider the following 292-residue polypeptide: 4-hydroxy-tetrahydrodipicolinate synthase (292 aa).

Threonine 45 is a binding site for pyruvate. The active-site Proton donor/acceptor is the tyrosine 133. Lysine 161 functions as the Schiff-base intermediate with substrate in the catalytic mechanism. Isoleucine 203 serves as a coordination point for pyruvate.

The protein belongs to the DapA family. In terms of assembly, homotetramer; dimer of dimers.

The protein resides in the cytoplasm. The enzyme catalyses L-aspartate 4-semialdehyde + pyruvate = (2S,4S)-4-hydroxy-2,3,4,5-tetrahydrodipicolinate + H2O + H(+). It functions in the pathway amino-acid biosynthesis; L-lysine biosynthesis via DAP pathway; (S)-tetrahydrodipicolinate from L-aspartate: step 3/4. Catalyzes the condensation of (S)-aspartate-beta-semialdehyde [(S)-ASA] and pyruvate to 4-hydroxy-tetrahydrodipicolinate (HTPA). The protein is 4-hydroxy-tetrahydrodipicolinate synthase of Salmonella paratyphi A (strain AKU_12601).